Here is a 407-residue protein sequence, read N- to C-terminus: Peptidase T (407 aa).

Residue histidine 77 participates in Zn(2+) binding. The active site involves aspartate 79. Zn(2+) is bound at residue aspartate 138. The Proton acceptor role is filled by glutamate 172. Positions 173, 195, and 377 each coordinate Zn(2+).

Belongs to the peptidase M20B family. Requires Zn(2+) as cofactor.

It localises to the cytoplasm. The catalysed reaction is Release of the N-terminal residue from a tripeptide.. Functionally, cleaves the N-terminal amino acid of tripeptides. The chain is Peptidase T from Aeromonas salmonicida (strain A449).